We begin with the raw amino-acid sequence, 403 residues long: S-adenosylmethionine synthase (403 aa).

Residue His-15 participates in ATP binding. Asp-17 serves as a coordination point for Mg(2+). Glu-43 is a binding site for K(+). 2 residues coordinate L-methionine: Glu-56 and Gln-99. The interval 99-109 (QSPDINQGVDR) is flexible loop. Residues 166-168 (DAK), 232-233 (KF), Asp-241, 247-248 (RK), Ala-264, and Lys-268 each bind ATP. Residue Asp-241 coordinates L-methionine. Lys-272 is an L-methionine binding site.

This sequence belongs to the AdoMet synthase family. Homotetramer; dimer of dimers. Mg(2+) is required as a cofactor. K(+) serves as cofactor.

It localises to the cytoplasm. It catalyses the reaction L-methionine + ATP + H2O = S-adenosyl-L-methionine + phosphate + diphosphate. The protein operates within amino-acid biosynthesis; S-adenosyl-L-methionine biosynthesis; S-adenosyl-L-methionine from L-methionine: step 1/1. Its function is as follows. Catalyzes the formation of S-adenosylmethionine (AdoMet) from methionine and ATP. The overall synthetic reaction is composed of two sequential steps, AdoMet formation and the subsequent tripolyphosphate hydrolysis which occurs prior to release of AdoMet from the enzyme. This Xylella fastidiosa (strain Temecula1 / ATCC 700964) protein is S-adenosylmethionine synthase.